A 310-amino-acid chain; its full sequence is Putative S-adenosyl-L-methionine-dependent methyltransferase Franean1_4929 (310 aa).

A disordered region spans residues 1–28 (MSRPSAPRGRTELRSIHERGHERGSAGV). Residues 9-24 (GRTELRSIHERGHERG) show a composition bias toward basic and acidic residues. S-adenosyl-L-methionine is bound by residues Asp-136 and 165–166 (DL).

This sequence belongs to the UPF0677 family.

Its function is as follows. Exhibits S-adenosyl-L-methionine-dependent methyltransferase activity. The polypeptide is Putative S-adenosyl-L-methionine-dependent methyltransferase Franean1_4929 (Parafrankia sp. (strain EAN1pec)).